A 302-amino-acid chain; its full sequence is Large ribosomal subunit protein uL18 (302 aa).

It belongs to the universal ribosomal protein uL18 family. As to quaternary structure, component of the large ribosomal subunit (LSU).

The protein localises to the cytoplasm. The protein resides in the nucleus. Functionally, component of the ribosome, a large ribonucleoprotein complex responsible for the synthesis of proteins in the cell. The small ribosomal subunit (SSU) binds messenger RNAs (mRNAs) and translates the encoded message by selecting cognate aminoacyl-transfer RNA (tRNA) molecules. The large subunit (LSU) contains the ribosomal catalytic site termed the peptidyl transferase center (PTC), which catalyzes the formation of peptide bonds, thereby polymerizing the amino acids delivered by tRNAs into a polypeptide chain. The nascent polypeptides leave the ribosome through a tunnel in the LSU and interact with protein factors that function in enzymatic processing, targeting, and the membrane insertion of nascent chains at the exit of the ribosomal tunnel. The sequence is that of Large ribosomal subunit protein uL18 (RPL5) from Cucumis sativus (Cucumber).